We begin with the raw amino-acid sequence, 752 residues long: MGPLMVLFCLLFVYTGLADSAPSCPQNVNISGGTFTLSHGWAPGSLLTYSCPQGLYPSPASRLCKSSGQWQTPGATRSLSKAVCKPVRCPAPVSFENGIYTPRLGSYPVGGNVSFECEDGFILRGSPVRQCRPNGMWDGETAVCDNGAGHCPNPGISLGAVRTGFRFGHGDKVRYRCSSNLVLTGSSERECQGNGVWSGTEPICRQPYSYDFPEDVAPALGTSFSHMLGATNPTQKTKESLGRKIQIQRSGHLNLYLLLDCSQSVSENDFLIFKESASLMVDRIFSFEINVSVAIITFASKPKVLMSVLNDNSRDMTEVISSLENANYKDHENGTGTNTYAALNSVYLMMNNQMRILGMETMAWQEIRHAIILLTDGKSNMGGSPKTAVDRIREILNINQKRNDYLDIYAIGVGKLDVDWRELNELGSKKDGERHAFILQDTKALHQVFEHMLDVSKLTDTICGVGNMSANASDQERTPWHVTIKPKSQETCRGALISDQWVLTAAHCFRDGNDHSLWRVNVGDPKSQWGKEFLIEKAVISPGFDVFAKKNQGILEFYGDDIALLKLAQKVKMSTHARPICLPCTMEANLALRRPQGSTCRDHENELLNKQSVPAHFVALNGSKLNINLKMGVEWTSCAEVVSQEKTMFPNLTDVREVVTDQFLCSGTQEDESPCKGESGGAVFLERRFRFFQVGLVSWGLYNPCLGSADKNSRKRAPRSKVPPPRDFHINLFRMQPWLRQHLGDVLNFLPL.

Positions 1–20 are cleaved as a signal peptide; sequence MGPLMVLFCLLFVYTGLADS. Sushi domains follow at residues 22–86, 87–146, and 149–206; these read PSCP…VCKP, VRCP…VCDN, and GHCP…ICRQ. Cystine bridges form between cysteine 24–cysteine 64, cysteine 51–cysteine 84, cysteine 89–cysteine 131, cysteine 117–cysteine 144, cysteine 151–cysteine 191, and cysteine 177–cysteine 204. Asparagine 29 is a glycosylation site (N-linked (GlcNAc...) asparagine). Asparagine 112 carries an N-linked (GlcNAc...) asparagine glycan. A VWFA domain is found at 254-452; the sequence is NLYLLLDCSQ…KALHQVFEHM (199 aa). Residues 260-264 carry the MIDAS-like motif motif; that stretch reads DCSQS. Mg(2+)-binding residues include serine 262 and serine 264. N-linked (GlcNAc...) asparagine glycans are attached at residues asparagine 290 and asparagine 333. Position 337 (threonine 337) interacts with Mg(2+). Intrachain disulfides connect cysteine 463–cysteine 581, cysteine 492–cysteine 508, and cysteine 584–cysteine 600. The 281-residue stretch at 464 to 744 folds into the Peptidase S1 domain; that stretch reads GVGNMSANAS…MQPWLRQHLG (281 aa). 2 N-linked (GlcNAc...) asparagine glycosylation sites follow: asparagine 467 and asparagine 471. Residues histidine 507 and aspartate 561 each act as charge relay system in the active site. 2 N-linked (GlcNAc...) asparagine glycosylation sites follow: asparagine 621 and asparagine 651. 2 disulfide bridges follow: cysteine 638–cysteine 665 and cysteine 675–cysteine 705. The active-site Charge relay system is serine 679.

Belongs to the peptidase S1 family. As to quaternary structure, serine protease component of the C3 convertase, also named C4bC2b, composed of the serine protease complement C2b and complement C4b. Serine protease component of the C5 convertase, also named C4bC2bC3b, composed of the serine protease complement C2b, complement C3b, as well as complement C4b. Mg(2+) is required as a cofactor. Requires Mn(2+) as cofactor. Post-translationally, cleaved and activated by different proteases depending on the complement pathway to generate complement C2a and serine protease complement C2b chains. Cleaved and activated by C1S following activation by the classical complement system. Cleaved and activated by MASP2 following activation by the lectin complement system. Cleaved and activated by GZMK following activation by the GZMK complement system.

It localises to the secreted. The protein localises to the cell surface. It catalyses the reaction Selective cleavage of Arg-|-Ser bond in complement component C3 alpha-chain to form C3a and C3b, and Arg-|-Xaa bond in complement component C5 alpha-chain to form C5a and C5b.. In terms of biological role, precursor of the catalytic component of the C3 and C5 convertase complexes, which are part of the complement pathway, a cascade of proteins that leads to phagocytosis and breakdown of pathogens and signaling that strengthens the adaptive immune system. Component C2 is part of the classical, lectin and GZMK complement systems. Functionally, catalytic component of the complement C3 and C5 convertase complexes. Following complement activation, recruited to the surface of pathogens by complement C4b opsonin to form the C3 convertase, or C3b and C4b opsonins to form the C5 convertase. As part of the C3 convertase, cleaves and activate C3 into C3a anaphylatoxin and C3b opsonin, the next components of the complement pathways. As part of the C5 convertase, cleaves and activate C5 into C5a anaphylatoxin and C5b component of the membrane attack complex. This chain is Complement C2, found in Gorilla gorilla gorilla (Western lowland gorilla).